A 243-amino-acid chain; its full sequence is Uroporphyrinogen-III C-methyltransferase (243 aa).

S-adenosyl-L-homocysteine is bound by residues P12, 88–90 (SGD), 118–119 (ST), M166, and A195.

It belongs to the precorrin methyltransferase family.

The enzyme catalyses uroporphyrinogen III + 2 S-adenosyl-L-methionine = precorrin-2 + 2 S-adenosyl-L-homocysteine + H(+). The protein operates within cofactor biosynthesis; adenosylcobalamin biosynthesis; precorrin-2 from uroporphyrinogen III: step 1/1. It functions in the pathway porphyrin-containing compound metabolism; siroheme biosynthesis; precorrin-2 from uroporphyrinogen III: step 1/1. In terms of biological role, catalyzes the two successive C-2 and C-7 methylation reactions involved in the conversion of uroporphyrinogen III to precorrin-2 via the intermediate formation of precorrin-1. It is a step in the biosynthesis of both cobalamin (vitamin B12) and siroheme. The chain is Uroporphyrinogen-III C-methyltransferase from Synechococcus elongatus (strain ATCC 33912 / PCC 7942 / FACHB-805) (Anacystis nidulans R2).